A 23-amino-acid polypeptide reads, in one-letter code: Keratin (23 aa).

The IF rod domain occupies 1–23 (YSSQLAQVQGLIGNVESQLAEIR). A coil 2 region spans residues 1 to 23 (YSSQLAQVQGLIGNVESQLAEIR).

It belongs to the intermediate filament family.

This is Keratin from Cervus elaphus (Red deer).